The chain runs to 313 residues: uncharacterized protein (313 aa).

The next 3 helical transmembrane spans lie at 19–41 (GLAV…AGFL), 51–68 (AIIG…IFFL), and 81–103 (IAEF…DFAI).

Its subcellular location is the cell membrane. This is an uncharacterized protein from Aquifex aeolicus (strain VF5).